Here is a 155-residue protein sequence, read N- to C-terminus: Endoribonuclease YbeY (155 aa).

3 residues coordinate Zn(2+): His117, His121, and His127.

It belongs to the endoribonuclease YbeY family. The cofactor is Zn(2+).

Its subcellular location is the cytoplasm. In terms of biological role, single strand-specific metallo-endoribonuclease involved in late-stage 70S ribosome quality control and in maturation of the 3' terminus of the 16S rRNA. This is Endoribonuclease YbeY from Dichelobacter nodosus (strain VCS1703A).